A 29-amino-acid chain; its full sequence is Cyclotide vibi-A (29 aa).

The segment at residues 1-29 (GLPVCGETCFGGTCNTPGCSCSYPICTRN) is a cross-link (cyclopeptide (Gly-Asn)). Intrachain disulfides connect Cys5/Cys19, Cys9/Cys21, and Cys14/Cys26.

In terms of processing, this is a cyclic peptide.

Probably participates in a plant defense mechanism. The chain is Cyclotide vibi-A from Viola biflora (Yellow wood violet).